Reading from the N-terminus, the 161-residue chain is Ubiquitin-conjugating enzyme 15 (161 aa).

Residues 15-161 enclose the UBC core domain; sequence IACNRLQKEL…TRWWFHDDKV (147 aa). The active-site Glycyl thioester intermediate is cysteine 99.

Belongs to the ubiquitin-conjugating enzyme family.

It carries out the reaction S-ubiquitinyl-[E1 ubiquitin-activating enzyme]-L-cysteine + [E2 ubiquitin-conjugating enzyme]-L-cysteine = [E1 ubiquitin-activating enzyme]-L-cysteine + S-ubiquitinyl-[E2 ubiquitin-conjugating enzyme]-L-cysteine.. It functions in the pathway protein modification; protein ubiquitination. Accepts the ubiquitin from the E1 complex and catalyzes its covalent attachment to other proteins. This is Ubiquitin-conjugating enzyme 15 (UBC15) from Arabidopsis thaliana (Mouse-ear cress).